A 92-amino-acid chain; its full sequence is Putative membrane protein insertion efficiency factor (92 aa).

Belongs to the UPF0161 family.

It localises to the cell inner membrane. In terms of biological role, could be involved in insertion of integral membrane proteins into the membrane. This Synechococcus sp. (strain CC9902) protein is Putative membrane protein insertion efficiency factor.